The primary structure comprises 291 residues: Venom metalloproteinase inhibitor DM43 (291 aa).

Ig-like V-type domains are found at residues 22 to 79 and 114 to 171; these read TNVT…ILTS and GLET…PASA. An N-linked (GlcNAc...) asparagine glycan is attached at Asn-23. 2 disulfide bridges follow: Cys-28/Cys-74 and Cys-121/Cys-163. N-linked (GlcNAc...) asparagine glycans are attached at residues Asn-156, Asn-160, and Asn-175. In terms of domain architecture, Ig-like V-type 3 spans 191 to 288; sequence PKANFYILND…DSNVLELDLS (98 aa). A disulfide bridge links Cys-213 with Cys-265.

As to quaternary structure, homodimer. N-glycosylated. As to expression, blood and milk.

Functionally, metalloproteinase inhibitor. In Didelphis marsupialis (Southern opossum), this protein is Venom metalloproteinase inhibitor DM43.